Reading from the N-terminus, the 272-residue chain is Ethanolamine ammonia-lyase small subunit (272 aa).

The adenosylcob(III)alamin site is built by V161, E182, and C211.

This sequence belongs to the EutC family. The basic unit is a heterodimer which dimerizes to form tetramers. The heterotetramers trimerize; 6 large subunits form a core ring with 6 small subunits projecting outwards. Adenosylcob(III)alamin is required as a cofactor.

The protein localises to the bacterial microcompartment. The catalysed reaction is ethanolamine = acetaldehyde + NH4(+). The protein operates within amine and polyamine degradation; ethanolamine degradation. Catalyzes the deamination of various vicinal amino-alcohols to oxo compounds. Allows this organism to utilize ethanolamine as the sole source of nitrogen and carbon in the presence of external vitamin B12. This Pseudomonas putida (strain W619) protein is Ethanolamine ammonia-lyase small subunit.